Reading from the N-terminus, the 105-residue chain is MSKLHIKKGDTVYVNAGEDKGKTGRVLKVLVKEGRAIVEGINMVSKSTKPNAKNPQGGIVKQEASIHISNLNPVDPKTGKATRIGRRKSSEGTLVRYSKKSGEEI.

Residues histidine 67–isoleucine 105 form a disordered region.

Belongs to the universal ribosomal protein uL24 family. Part of the 50S ribosomal subunit.

One of two assembly initiator proteins, it binds directly to the 5'-end of the 23S rRNA, where it nucleates assembly of the 50S subunit. Functionally, one of the proteins that surrounds the polypeptide exit tunnel on the outside of the subunit. The polypeptide is Large ribosomal subunit protein uL24 (Bacteroides thetaiotaomicron (strain ATCC 29148 / DSM 2079 / JCM 5827 / CCUG 10774 / NCTC 10582 / VPI-5482 / E50)).